A 91-amino-acid polypeptide reads, in one-letter code: Small ribosomal subunit protein uS19 (91 aa).

Belongs to the universal ribosomal protein uS19 family.

Its function is as follows. Protein S19 forms a complex with S13 that binds strongly to the 16S ribosomal RNA. This chain is Small ribosomal subunit protein uS19, found in Shouchella clausii (strain KSM-K16) (Alkalihalobacillus clausii).